Reading from the N-terminus, the 444-residue chain is N-succinylarginine dihydrolase (444 aa).

Residues alanine 19–serine 28, asparagine 110, and histidine 137–arginine 138 each bind substrate. The active site involves glutamate 174. Position 214 (arginine 214) interacts with substrate. Histidine 250 is an active-site residue. Substrate-binding residues include aspartate 252 and asparagine 362. The active-site Nucleophile is cysteine 368.

Belongs to the succinylarginine dihydrolase family. Homodimer.

The catalysed reaction is N(2)-succinyl-L-arginine + 2 H2O + 2 H(+) = N(2)-succinyl-L-ornithine + 2 NH4(+) + CO2. The protein operates within amino-acid degradation; L-arginine degradation via AST pathway; L-glutamate and succinate from L-arginine: step 2/5. Catalyzes the hydrolysis of N(2)-succinylarginine into N(2)-succinylornithine, ammonia and CO(2). In Shewanella oneidensis (strain ATCC 700550 / JCM 31522 / CIP 106686 / LMG 19005 / NCIMB 14063 / MR-1), this protein is N-succinylarginine dihydrolase.